We begin with the raw amino-acid sequence, 103 residues long: Large ribosomal subunit protein uL24 (103 aa).

Belongs to the universal ribosomal protein uL24 family. In terms of assembly, part of the 50S ribosomal subunit.

Its function is as follows. One of two assembly initiator proteins, it binds directly to the 5'-end of the 23S rRNA, where it nucleates assembly of the 50S subunit. Functionally, one of the proteins that surrounds the polypeptide exit tunnel on the outside of the subunit. In Christiangramia forsetii (strain DSM 17595 / CGMCC 1.15422 / KT0803) (Gramella forsetii), this protein is Large ribosomal subunit protein uL24.